We begin with the raw amino-acid sequence, 130 residues long: Histone H2A type 2-B (130 aa).

A disordered region spans residues 1-22; it reads MSGRGKQGGKARAKAKSRSSRA. An N-acetylserine modification is found at serine 2. Serine 2 is modified (phosphoserine; by RPS6KA5). Arginine 4 carries the citrulline; alternate modification. Residue arginine 4 is modified to Symmetric dimethylarginine; by PRMT5; alternate. Residue lysine 6 is modified to N6-(2-hydroxyisobutyryl)lysine. Basic residues predominate over residues 7–19; that stretch reads QGGKARAKAKSRS. The residue at position 10 (lysine 10) is an N6-(2-hydroxyisobutyryl)lysine; alternate. N6-(beta-hydroxybutyryl)lysine; alternate occurs at positions 10 and 14. Lysine 10 is modified (N6-lactoyllysine; alternate). At lysine 10 the chain carries N6-succinyllysine; alternate. Lysine 14 is covalently cross-linked (Glycyl lysine isopeptide (Lys-Gly) (interchain with G-Cter in ubiquitin); alternate). Lysine 16 is covalently cross-linked (Glycyl lysine isopeptide (Lys-Gly) (interchain with G-Cter in ubiquitin)). The residue at position 37 (lysine 37) is an N6-(2-hydroxyisobutyryl)lysine; alternate. Lysine 37 carries the N6-(beta-hydroxybutyryl)lysine; alternate modification. Lysine 37 carries the post-translational modification N6-crotonyllysine; alternate. Lysine 75 and lysine 76 each carry N6-(2-hydroxyisobutyryl)lysine. Position 96 is an N6-(2-hydroxyisobutyryl)lysine; alternate (lysine 96). Lysine 96 carries the post-translational modification N6-(beta-hydroxybutyryl)lysine; alternate. At lysine 96 the chain carries N6-succinyllysine; alternate. N6-glutaryllysine; alternate is present on lysine 96. Glutamine 105 is subject to N5-methylglutamine. The residue at position 119 (lysine 119) is an N6-(2-hydroxyisobutyryl)lysine; alternate. Lysine 119 bears the N6-(beta-hydroxybutyryl)lysine; alternate mark. 2 positions are modified to N6-crotonyllysine; alternate: lysine 119 and lysine 120. N6-glutaryllysine; alternate is present on residues lysine 119 and lysine 120. A Glycyl lysine isopeptide (Lys-Gly) (interchain with G-Cter in ubiquitin); alternate cross-link involves residue lysine 120. At threonine 121 the chain carries Phosphothreonine; by DCAF1.

It belongs to the histone H2A family. In terms of assembly, the nucleosome is a histone octamer containing two molecules each of H2A, H2B, H3 and H4 assembled in one H3-H4 heterotetramer and two H2A-H2B heterodimers. The octamer wraps approximately 147 bp of DNA. In terms of processing, deiminated on Arg-4 in granulocytes upon calcium entry. Monoubiquitination of Lys-120 (H2AK119Ub) by RING1, TRIM37 and RNF2/RING2 complex gives a specific tag for epigenetic transcriptional repression and participates in X chromosome inactivation of female mammals. It is involved in the initiation of both imprinted and random X inactivation. Ubiquitinated H2A is enriched in inactive X chromosome chromatin. Ubiquitination of H2A functions downstream of methylation of 'Lys-27' of histone H3 (H3K27me). H2AK119Ub by RNF2/RING2 can also be induced by ultraviolet and may be involved in DNA repair. Monoubiquitination of Lys-120 (H2AK119Ub) by TRIM37 may promote transformation of cells in a number of breast cancers. Following DNA double-strand breaks (DSBs), it is ubiquitinated through 'Lys-63' linkage of ubiquitin moieties by the E2 ligase UBE2N and the E3 ligases RNF8 and RNF168, leading to the recruitment of repair proteins to sites of DNA damage. Ubiquitination at Lys-14 and Lys-16 (H2AK13Ub and H2AK15Ub, respectively) in response to DNA damage is initiated by RNF168 that mediates monoubiquitination at these 2 sites, and 'Lys-63'-linked ubiquitin are then conjugated to monoubiquitin; RNF8 is able to extend 'Lys-63'-linked ubiquitin chains in vitro. Deubiquitinated by USP51 at Lys-14 and Lys-16 (H2AK13Ub and H2AK15Ub, respectively) after damaged DNA is repaired. H2AK119Ub and ionizing radiation-induced 'Lys-63'-linked ubiquitination (H2AK13Ub and H2AK15Ub) are distinct events. Post-translationally, phosphorylation on Ser-2 (H2AS1ph) is enhanced during mitosis. Phosphorylation on Ser-2 by RPS6KA5/MSK1 directly represses transcription. Acetylation of H3 inhibits Ser-2 phosphorylation by RPS6KA5/MSK1. Phosphorylation at Thr-121 (H2AT120ph) by DCAF1 is present in the regulatory region of many tumor suppresor genes and down-regulates their transcription. In terms of processing, symmetric dimethylation on Arg-4 by the PRDM1/PRMT5 complex may play a crucial role in the germ-cell lineage. Glutamine methylation at Gln-105 (H2AQ104me) by FBL is specifically dedicated to polymerase I. It is present at 35S ribosomal DNA locus and impairs binding of the FACT complex. Post-translationally, crotonylation (Kcr) is specifically present in male germ cells and marks testis-specific genes in post-meiotic cells, including X-linked genes that escape sex chromosome inactivation in haploid cells. Crotonylation marks active promoters and enhancers and confers resistance to transcriptional repressors. It is also associated with post-meiotically activated genes on autosomes. In terms of processing, lactylated in macrophages by EP300/P300 by using lactoyl-CoA directly derived from endogenous or exogenous lactate, leading to stimulates gene transcription.

The protein resides in the nucleus. It localises to the chromosome. In terms of biological role, core component of nucleosome. Nucleosomes wrap and compact DNA into chromatin, limiting DNA accessibility to the cellular machineries which require DNA as a template. Histones thereby play a central role in transcription regulation, DNA repair, DNA replication and chromosomal stability. DNA accessibility is regulated via a complex set of post-translational modifications of histones, also called histone code, and nucleosome remodeling. This is Histone H2A type 2-B from Homo sapiens (Human).